Here is a 721-residue protein sequence, read N- to C-terminus: MDGKVGNTTTGCPVMHGGMTSAGTSNTAWWPNALNLDILHQHDTKTNPMGKDFNYREEVKKLNFEALKKDLHALMTDSQAWWPADWGHYGGLMIRMSWHAAGSYRVADGRGGAGTGNQRFAPLNSWPDNVNLDKARRLLWPIKKKYGNKISWADLIVLAGTIAYESMGLKTFGFGFGREDIWHPEKDVYWGSEQEWLGAKRYDDKDRQSLETPLAAVQMGLIYVNPEGVNGQPDPLRTAQDVRVTFGRMAMNDEETVALTAGGHTVGKCHGNGNAKFLGPEPEAADIEDQGLGWINKTTRGIGRNTVSSGIEGAWTTHPTQWDNGYFYLLLNYDWELKKSPAGAWQWEPIHIKEEDKPVDVEDPAIRHNPIMTDADMAIKMDPVYRKIAERFYKDPDYFAEVFARAWFKLTHRDMGPKTRYIGPDVPKEDLIWQDPVPAGNRAYDIAAAKAKIAASNLTIGEMVSTAWDSARTFRGSDKRGGANGARIRLKPQKDWEGNEPQRLTKVLRILEDIAADTGASVADVIVLAGNVGIEKAAKAAGFDIIVPFAPGRGDATDDMTDAESFDVLEPLHDGYRNWLKKAYDVRPEELMLDRTQLMGLTAHEMTVLVGGLRVLGTNHNNTQHGVFTDRVGALTNDFFVNLTDMANVWIPSKDNLYEIRDRKAGNIKWTATRVDLVFGSNSILRSYAEVYAQDDNKGKFIQDFVAAWTKVMNADRFDLA.

The segment at residues 98 to 223 is a cross-link (tryptophyl-tyrosyl-methioninium (Trp-Tyr) (with M-249)); it reads WHAAGSYRVA…LAAVQMGLIY (126 aa). The active-site Proton acceptor is the histidine 99. Positions 223–249 form a cross-link, tryptophyl-tyrosyl-methioninium (Tyr-Met) (with W-98); that stretch reads YVNPEGVNGQPDPLRTAQDVRVTFGRM. Residue histidine 264 participates in heme b binding.

The protein belongs to the peroxidase family. Peroxidase/catalase subfamily. In terms of assembly, homodimer or homotetramer. Heme b serves as cofactor. Post-translationally, formation of the three residue Trp-Tyr-Met cross-link is important for the catalase, but not the peroxidase activity of the enzyme.

The enzyme catalyses H2O2 + AH2 = A + 2 H2O. The catalysed reaction is 2 H2O2 = O2 + 2 H2O. Its function is as follows. Bifunctional enzyme with both catalase and broad-spectrum peroxidase activity. This Legionella pneumophila (strain Corby) protein is Catalase-peroxidase 1.